The following is a 452-amino-acid chain: Bifunctional protein GlmU (452 aa).

A pyrophosphorylase region spans residues Met1 to Arg226. UDP-N-acetyl-alpha-D-glucosamine contacts are provided by residues Leu7–Gly10, Lys21, Gln73, and Gly78–Thr79. Asp103 provides a ligand contact to Mg(2+). UDP-N-acetyl-alpha-D-glucosamine is bound by residues Gly140, Glu155, Asn170, and Asn224. Residue Asn224 participates in Mg(2+) binding. The tract at residues Leu227–Ala247 is linker. The segment at Gly248 to Gln452 is N-acetyltransferase. UDP-N-acetyl-alpha-D-glucosamine-binding residues include Arg329 and Lys347. Catalysis depends on His359, which acts as the Proton acceptor. Residues Tyr362 and Asn373 each coordinate UDP-N-acetyl-alpha-D-glucosamine. Acetyl-CoA contacts are provided by residues Ala376, Asn382–Tyr383, Ala419, and Arg436.

In the N-terminal section; belongs to the N-acetylglucosamine-1-phosphate uridyltransferase family. It in the C-terminal section; belongs to the transferase hexapeptide repeat family. As to quaternary structure, homotrimer. Mg(2+) is required as a cofactor.

Its subcellular location is the cytoplasm. The catalysed reaction is alpha-D-glucosamine 1-phosphate + acetyl-CoA = N-acetyl-alpha-D-glucosamine 1-phosphate + CoA + H(+). It carries out the reaction N-acetyl-alpha-D-glucosamine 1-phosphate + UTP + H(+) = UDP-N-acetyl-alpha-D-glucosamine + diphosphate. It participates in nucleotide-sugar biosynthesis; UDP-N-acetyl-alpha-D-glucosamine biosynthesis; N-acetyl-alpha-D-glucosamine 1-phosphate from alpha-D-glucosamine 6-phosphate (route II): step 2/2. The protein operates within nucleotide-sugar biosynthesis; UDP-N-acetyl-alpha-D-glucosamine biosynthesis; UDP-N-acetyl-alpha-D-glucosamine from N-acetyl-alpha-D-glucosamine 1-phosphate: step 1/1. It functions in the pathway bacterial outer membrane biogenesis; LPS lipid A biosynthesis. Its function is as follows. Catalyzes the last two sequential reactions in the de novo biosynthetic pathway for UDP-N-acetylglucosamine (UDP-GlcNAc). The C-terminal domain catalyzes the transfer of acetyl group from acetyl coenzyme A to glucosamine-1-phosphate (GlcN-1-P) to produce N-acetylglucosamine-1-phosphate (GlcNAc-1-P), which is converted into UDP-GlcNAc by the transfer of uridine 5-monophosphate (from uridine 5-triphosphate), a reaction catalyzed by the N-terminal domain. The protein is Bifunctional protein GlmU of Synechococcus sp. (strain ATCC 27144 / PCC 6301 / SAUG 1402/1) (Anacystis nidulans).